The sequence spans 689 residues: Glycine--tRNA ligase beta subunit (689 aa).

This sequence belongs to the class-II aminoacyl-tRNA synthetase family. As to quaternary structure, tetramer of two alpha and two beta subunits.

The protein localises to the cytoplasm. The catalysed reaction is tRNA(Gly) + glycine + ATP = glycyl-tRNA(Gly) + AMP + diphosphate. This is Glycine--tRNA ligase beta subunit from Acinetobacter baylyi (strain ATCC 33305 / BD413 / ADP1).